The sequence spans 637 residues: MGLLSQGSPLSWEETQRHADHVRRHGILQFLHIYHAVKDRHKDVLKWGDEVEYMLVSFDHENRKVQLLLNGGDVLETLQEKGERTNPNHPTLWRPEYGSYMIEGTPGQPYGGTMSEFNTVEANMRKRRKEATSVLGEHQALCTITSFPRLGCPGFTLPEHRPNPEEGGASKSLFFPDEAINKHPRFGTLTRNIRHRRGEKVVINVPIFKDKNTPSPFVETFPEDAEASKASQPDHIYMDAMGFGMGNCCLQVTFQACSISEARYLYDQLATICPIVMALSAASPFYRGYVSDIDCRWGVISASVDDRTREERGLEPLKNNRFRISKSRYDSIDSYLSKCGEKYNDIDLTIDKEIYEQLLEEGIDHLLAQHVAHLFIRDPLTLFEEKIHLDDANESDHFENIQSTNWQTMRFKPPPPNSDIGWRVEFRPMEVQLTDFENSAYVVFVVLLTRVILSYKLDFLIPLSKVDENMKVAQKRDAVLQGMFYFRKDICKGGNAVVDGCSKAQSSSEPAAEEYTLMSIDTIINGKEGVFPGLIPILNSYLENMEVDVDTRCSILNYLKLIKKRASGELMTVARWMREFIANHPDYKQDSVITDEINYSLIWKCNQIADELCECPELLGSGFRKAKYSGGKSDPSA.

An N-acetylmethionine modification is found at Met1. Phosphoserine occurs at positions 5 and 8.

It belongs to the glutamate--cysteine ligase type 3 family. Heterodimer of a catalytic heavy chain and a regulatory light chain.

It catalyses the reaction L-cysteine + L-glutamate + ATP = gamma-L-glutamyl-L-cysteine + ADP + phosphate + H(+). The enzyme catalyses (2S)-2-aminobutanoate + L-glutamate + ATP = gamma-L-glutamyl-(2S)-2-aminobutanoate + ADP + phosphate + H(+). It functions in the pathway sulfur metabolism; glutathione biosynthesis; glutathione from L-cysteine and L-glutamate: step 1/2. Its activity is regulated as follows. Feedback inhibition by glutathione. In terms of biological role, catalyzes the ATP-dependent ligation of L-glutamate and L-cysteine and participates in the first and rate-limiting step in glutathione biosynthesis. This chain is Glutamate--cysteine ligase catalytic subunit, found in Mus musculus (Mouse).